The sequence spans 158 residues: Sec-independent protein translocase protein TatB (158 aa).

The helical transmembrane segment at 2–22 (FDGIGFMELLLIGVLGLVVLG) threads the bilayer. Residues 86–158 (LKQAAQSVNR…DTSSNPKANG (73 aa)) are disordered. 3 stretches are compositionally biased toward polar residues: residues 88–107 (QAAQ…SQGT), 113–136 (QIHS…QHLT), and 143–158 (EPSQ…KANG).

Belongs to the TatB family. As to quaternary structure, the Tat system comprises two distinct complexes: a TatABC complex, containing multiple copies of TatA, TatB and TatC subunits, and a separate TatA complex, containing only TatA subunits. Substrates initially bind to the TatABC complex, which probably triggers association of the separate TatA complex to form the active translocon.

It is found in the cell inner membrane. Functionally, part of the twin-arginine translocation (Tat) system that transports large folded proteins containing a characteristic twin-arginine motif in their signal peptide across membranes. Together with TatC, TatB is part of a receptor directly interacting with Tat signal peptides. TatB may form an oligomeric binding site that transiently accommodates folded Tat precursor proteins before their translocation. The sequence is that of Sec-independent protein translocase protein TatB from Shewanella putrefaciens (strain CN-32 / ATCC BAA-453).